The primary structure comprises 61 residues: Prophage outer membrane lipoprotein RzoR (61 aa).

The N-terminal stretch at 1–19 is a signal peptide; the sequence is MRKLKMMLCVMMLPLVVVG. Cys20 is lipidated: N-palmitoyl cysteine. A lipid anchor (S-diacylglycerol cysteine) is attached at Cys20.

The protein belongs to the lambdalikevirus o-spanin family. Homodimer; disulfide-linked. Interacts (via C-terminus) with RZ (via C-terminus). Part of the spanin complex which spans the entire periplasmic space. The spanin complex is composed of spanin, inner membrane subunit and spanin, outer membrane subunit.

The protein localises to the cell outer membrane. Functionally, component of the spanin complex that disrupts the outer membrane and causes cell lysis during virus exit. The spanin complex conducts the final step in cell lysis by disrupting the outer membrane after holin and endolysin action have permeabilized the inner membrane and degraded the host peptidoglycans. This is Prophage outer membrane lipoprotein RzoR (rzoR) from Escherichia coli (strain K12).